A 254-amino-acid chain; its full sequence is 5-oxoprolinase subunit A (254 aa).

It belongs to the LamB/PxpA family. Forms a complex composed of PxpA, PxpB and PxpC.

It catalyses the reaction 5-oxo-L-proline + ATP + 2 H2O = L-glutamate + ADP + phosphate + H(+). Its function is as follows. Catalyzes the cleavage of 5-oxoproline to form L-glutamate coupled to the hydrolysis of ATP to ADP and inorganic phosphate. The protein is 5-oxoprolinase subunit A of Brevibacillus brevis (strain 47 / JCM 6285 / NBRC 100599).